Here is a 644-residue protein sequence, read N- to C-terminus: Transmembrane 9 superfamily member 9 (644 aa).

Residues M1 to S27 form the signal peptide. Residues F28–H281 lie on the Lumenal side of the membrane. Residues W282–I302 traverse the membrane as a helical segment. Topologically, residues M303 to G351 are cytoplasmic. The helical transmembrane segment at T352–L372 threads the bilayer. Residues S373–R377 lie on the Lumenal side of the membrane. Residues G378–A398 form a helical membrane-spanning segment. Residues S399 to T418 lie on the Cytoplasmic side of the membrane. The helical transmembrane segment at A419–G439 threads the bilayer. Topologically, residues Q440–M451 are lumenal. A helical transmembrane segment spans residues F452–L472. Over G473–P501 the chain is Cytoplasmic. A helical transmembrane segment spans residues I502–F522. The Lumenal segment spans residues I523 to Y534. A helical membrane pass occupies residues I535–I555. At V556–S573 the chain is on the cytoplasmic side. Residues Y574–T594 form a helical membrane-spanning segment. Topologically, residues K595 to K600 are lumenal. The helical transmembrane segment at L601–L621 threads the bilayer. Over T622–D644 the chain is Cytoplasmic. Residues F633–Y638 carry the Endoplasmic reticulum export signal motif. The Golgi retention signal signature appears at K642–D644.

It belongs to the nonaspanin (TM9SF) (TC 9.A.2) family.

Its subcellular location is the endosome membrane. It is found in the golgi apparatus membrane. The protein is Transmembrane 9 superfamily member 9 of Arabidopsis thaliana (Mouse-ear cress).